Consider the following 222-residue polypeptide: Ras-related protein RABA4d (222 aa).

22–29 (GDSAVGKT) is a GTP binding site. An Effector region motif is present at residues 44–52 (SKATIGVEF). Residues 70–74 (DTAGQ), 128–131 (NKCD), and 158–159 (SA) contribute to the GTP site. Residues C218 and C219 are each lipidated (S-geranylgeranyl cysteine).

This sequence belongs to the small GTPase superfamily. Rab family. In terms of assembly, interacts with PI4KB1. In terms of tissue distribution, specifically expressed in pollen and localized to the tips of growing pollen tubes.

The protein localises to the cytoplasmic vesicle membrane. Its function is as follows. Intracellular vesicle trafficking and protein transport. Plays an important role in the regulation of pollen tube tip growth. This is Ras-related protein RABA4d (RABA4D) from Arabidopsis thaliana (Mouse-ear cress).